Here is a 390-residue protein sequence, read N- to C-terminus: Dual-specificity RNA methyltransferase RlmN (390 aa).

Catalysis depends on Glu110, which acts as the Proton acceptor. Positions 116 to 355 (EADRATLCVS…VIIRKTRGDD (240 aa)) constitute a Radical SAM core domain. The cysteines at positions 123 and 360 are disulfide-linked. The [4Fe-4S] cluster site is built by Cys130, Cys134, and Cys137. Residues 184 to 185 (GE), Ser216, 238 to 240 (SLH), and Asn317 contribute to the S-adenosyl-L-methionine site. Residue Cys360 is the S-methylcysteine intermediate of the active site.

It belongs to the radical SAM superfamily. RlmN family. [4Fe-4S] cluster serves as cofactor.

It is found in the cytoplasm. It catalyses the reaction adenosine(2503) in 23S rRNA + 2 reduced [2Fe-2S]-[ferredoxin] + 2 S-adenosyl-L-methionine = 2-methyladenosine(2503) in 23S rRNA + 5'-deoxyadenosine + L-methionine + 2 oxidized [2Fe-2S]-[ferredoxin] + S-adenosyl-L-homocysteine. The catalysed reaction is adenosine(37) in tRNA + 2 reduced [2Fe-2S]-[ferredoxin] + 2 S-adenosyl-L-methionine = 2-methyladenosine(37) in tRNA + 5'-deoxyadenosine + L-methionine + 2 oxidized [2Fe-2S]-[ferredoxin] + S-adenosyl-L-homocysteine. Its function is as follows. Specifically methylates position 2 of adenine 2503 in 23S rRNA and position 2 of adenine 37 in tRNAs. m2A2503 modification seems to play a crucial role in the proofreading step occurring at the peptidyl transferase center and thus would serve to optimize ribosomal fidelity. This chain is Dual-specificity RNA methyltransferase RlmN, found in Haemophilus influenzae (strain ATCC 51907 / DSM 11121 / KW20 / Rd).